The primary structure comprises 178 residues: Major non-capsid protein (178 aa).

Belongs to the tenuiviruses NCP family.

The protein resides in the host cytoplasm. Functionally, induces the formation of large intracellular inclusion body, organized in amorphous and crystalline arrays. Presumably the main cause of the stripe disease observed in host. The chain is Major non-capsid protein from Rice stripe virus (isolate T) (RSV).